Consider the following 602-residue polypeptide: GTP-binding protein 2 (602 aa).

Residues 18–64 (GPAMGGNLKARGAGGSSSCGGPKGKKKNGRNRGGKANNPPYLPPEAE) form a disordered region. Positions 29 to 39 (GAGGSSSCGGP) are enriched in gly residues. Residues 40-50 (KGKKKNGRNRG) show a composition bias toward basic residues. In terms of domain architecture, tr-type G spans 170 to 398 (FLDLRVAVLG…LNILPPLTNS (229 aa)). Residues 179 to 186 (GNVDSGKS), 260 to 264 (DLAGH), and 316 to 319 (SKVD) each bind GTP.

It belongs to the TRAFAC class translation factor GTPase superfamily. Classic translation factor GTPase family. GTPBP1 subfamily. Predominantly expressed in thymus, spleen, and testis. Expressed at lower levels in brain, heart, lung, kidney, and skeletal muscle. In testis, specifically expressed in spermatocytes and round spermatids.

This Mus musculus (Mouse) protein is GTP-binding protein 2.